The chain runs to 172 residues: NADH-ubiquinone oxidoreductase chain 6 (172 aa).

Transmembrane regions (helical) follow at residues 1 to 21, 27 to 47, 48 to 68, 87 to 107, and 138 to 158; these read MTYF…AVAS, YGVV…LSLG, ISFV…VVFV, VVGY…VGGF, and CGVG…FVVL.

The protein belongs to the complex I subunit 6 family.

Its subcellular location is the mitochondrion membrane. The enzyme catalyses a ubiquinone + NADH + 5 H(+)(in) = a ubiquinol + NAD(+) + 4 H(+)(out). Its function is as follows. Core subunit of the mitochondrial membrane respiratory chain NADH dehydrogenase (Complex I) that is believed to belong to the minimal assembly required for catalysis. Complex I functions in the transfer of electrons from NADH to the respiratory chain. The immediate electron acceptor for the enzyme is believed to be ubiquinone. In Uria aalge (Common mure), this protein is NADH-ubiquinone oxidoreductase chain 6 (MT-ND6).